The chain runs to 504 residues: Fibroblast growth factor receptor-like 1 (504 aa).

Residues 1 to 24 (MTPSPLLLLLLPPLLLGAFPPAAA) form the signal peptide. Residues 25–378 (ARGPPKMADK…SSSATSLPWP (354 aa)) are Extracellular-facing. In terms of domain architecture, Ig-like C2-type 1 spans 29–115 (PKMADKVVPR…GSLSVNYTLV (87 aa)). An intrachain disulfide couples C51 to C99. N111 is a glycosylation site (N-linked (GlcNAc...) asparagine). The segment at 123–155 (GKESLGPDSSSGGQEDPASQQWARPRFTQPSKM) is disordered. The span at 129 to 144 (PDSSSGGQEDPASQQW) shows a compositional bias: polar residues. Ig-like C2-type domains are found at residues 147–237 (PRFT…YKVD) and 246–354 (PVLT…AFLT). A disulfide bridge links C172 with C221. N-linked (GlcNAc...) asparagine glycosylation is found at N231, N255, and N293. Residues C268 and C338 are joined by a disulfide bond. The chain crosses the membrane as a helical span at residues 379-399 (VVIGIPAGAVFILGTLLLWLC). Topologically, residues 400 to 504 (QAQKKPCTPA…KVHQHIHYQC (105 aa)) are cytoplasmic. Residues 407–418 (TPAPAPPLPGHR) show a composition bias toward pro residues. The interval 407–435 (TPAPAPPLPGHRPPGTARDRSGDKDLPSL) is disordered. A compositionally biased stretch (basic and acidic residues) spans 423-432 (ARDRSGDKDL).

As to quaternary structure, interacts with FGF2 with a low affinity. In terms of tissue distribution, expressed preferentially in cartilaginous tissues and pancreas. Highly expressed in the liver, kidney, heart, brain and skeletal muscle. Weakly expressed in the lung, small intestine and spleen.

The protein resides in the membrane. Its function is as follows. Has a negative effect on cell proliferation. This Homo sapiens (Human) protein is Fibroblast growth factor receptor-like 1 (FGFRL1).